The primary structure comprises 175 residues: ALAGTIIAGASLTFQVLDKVLEELGKVSRKIAVGIDNESGGTWTALNAYFRSGTTDVILPEFVPNTKALLYSGRKDTGPVATGAVAAFAYYMSSGNTLGVMFSVPFDYNWYSNWWDVKIYSGKRRADQGMYEDLYYGNPYRGDNGWHEKNLGYGLRMKGIMTSAGEAKMQIKISR.

The plays an important role in the hemolytic activity stretch occupies residues 1–10; sequence ALAGTIIAGA. Positions 9–28 are N-terminal region; that stretch reads GASLTFQVLDKVLEELGKVS. S52, V85, S103, P105, Y131, Y135, and Y136 together coordinate phosphocholine. A trp-rich region, which is important for the binding to lipid membrane region spans residues 103-118; it reads SVPFDYNWYSNWWDVK. Positions 141 to 143 match the Cell attachment site, crucial for protein stability motif; that stretch reads RGD.

In terms of assembly, octamer or nonamer in membranes. Monomer in the soluble state. Originally described as forming tetramer in the presence of a lipidic interface. In terms of tissue distribution, expressed in tentacles and mesenteric filaments.

Its subcellular location is the secreted. The protein localises to the nematocyst. It localises to the target cell membrane. Pore-forming protein that forms cations-selective hydrophilic pores of around 1 nm and causes cardiac stimulation and cytolysis. Pore formation is a multi-step process that involves specific recognition of membrane sphingomyelin (but neither cholesterol nor phosphatidylcholine) using aromatic rich region and adjacent phosphocholine (POC) binding site, firm binding to the membrane (mainly driven by hydrophobic interactions) accompanied by the transfer of the N-terminal region to the lipid-water interface and finally pore formation after oligomerization of monomers. Cytolytic effects include red blood cells hemolysis, platelet aggregation and lysis, cytotoxic and cytostatic effects on fibroblasts. Lethality in mammals has been ascribed to severe vasospasm of coronary vessels, cardiac arrhythmia, and inotropic effects. The protein is DELTA-stichotoxin-She4b of Stichodactyla helianthus (Sun anemone).